The chain runs to 314 residues: Basic leucine zipper 63 (314 aa).

A Phosphoserine; by KIN10 modification is found at S29. The segment at 94 to 177 is disordered; sequence KPQDTSGRSD…SRRRKQAHLS (84 aa). Positions 96-133 are enriched in polar residues; that stretch reads QDTSGRSDNGGANESEQASLASSKATPMMSSAITSGSE. In terms of domain architecture, bZIP spans 151 to 214; sequence NVKRVKRMLS…NDASVENRVL (64 aa). Residues 153-172 form a basic motif region; it reads KRVKRMLSNRESARRSRRRK. Positions 155 to 162 match the Nuclear localization signal 1 motif; it reads VKRMLSNR. The leucine-zipper stretch occupies residues 179-193; it reads LETQVSQLRVENSKL. The segment at 253–274 is disordered; the sequence is SLPSETSNSPDTTSSQVTTPEI. Phosphoserine; by KIN10 is present on residues S294 and S300. The Nuclear localization signal 2 signature appears at 295 to 302; the sequence is MRRVESLE.

The protein belongs to the bZIP family. Homodimer. Forms a heterodimer with LSD1, BZIP1, BZIP2, BZIP9, BZIP10, BZIP11, BZIP25, BZIP44 and BZIP53. Interacts with KIN10 and SNF4. Component of a ternary complex composed of BZIP2-BZIP63 heterodimer and KIN10. Phosphorylated. The phosphorylation at Ser-29, Ser-294 and Ser-300 by KIN10 strongly enhances its ability to form homo- as well as heterodimers and are then essential for its transcriptional activity. As to expression, expressed in roots, shoots, young leaves, pollen, and flowers.

The protein resides in the nucleus. Up-regulated by KIN10 under a phosphorylation-dependent manner. In terms of biological role, transcription factor involved in controlling responses to starvation. BZIP2-BZIP63-KIN10 complex binds to the ETFQO promoter to up-regulate its transcription. The chain is Basic leucine zipper 63 (BZIP63) from Arabidopsis thaliana (Mouse-ear cress).